The primary structure comprises 364 residues: Aminomethyltransferase (364 aa).

This sequence belongs to the GcvT family. In terms of assembly, the glycine cleavage system is composed of four proteins: P, T, L and H.

The enzyme catalyses N(6)-[(R)-S(8)-aminomethyldihydrolipoyl]-L-lysyl-[protein] + (6S)-5,6,7,8-tetrahydrofolate = N(6)-[(R)-dihydrolipoyl]-L-lysyl-[protein] + (6R)-5,10-methylene-5,6,7,8-tetrahydrofolate + NH4(+). Functionally, the glycine cleavage system catalyzes the degradation of glycine. The polypeptide is Aminomethyltransferase (Shewanella halifaxensis (strain HAW-EB4)).